The chain runs to 425 residues: Glutamate-1-semialdehyde 2,1-aminomutase (425 aa).

Position 265 is an N6-(pyridoxal phosphate)lysine (Lys265).

The protein belongs to the class-III pyridoxal-phosphate-dependent aminotransferase family. HemL subfamily. As to quaternary structure, homodimer. It depends on pyridoxal 5'-phosphate as a cofactor.

Its subcellular location is the cytoplasm. The enzyme catalyses (S)-4-amino-5-oxopentanoate = 5-aminolevulinate. Its pathway is porphyrin-containing compound metabolism; protoporphyrin-IX biosynthesis; 5-aminolevulinate from L-glutamyl-tRNA(Glu): step 2/2. In Nitrosospira multiformis (strain ATCC 25196 / NCIMB 11849 / C 71), this protein is Glutamate-1-semialdehyde 2,1-aminomutase.